A 726-amino-acid chain; its full sequence is Peroxisomal fatty acid beta-oxidation multifunctional protein (726 aa).

The protein in the N-terminal section; belongs to the enoyl-CoA hydratase/isomerase family. This sequence in the central section; belongs to the 3-hydroxyacyl-CoA dehydrogenase family. Monomer.

It is found in the peroxisome. The protein localises to the cytoplasm. Its subcellular location is the cytoskeleton. The enzyme catalyses a (3S)-3-hydroxyacyl-CoA = a (2E)-enoyl-CoA + H2O. It catalyses the reaction a 4-saturated-(3S)-3-hydroxyacyl-CoA = a (3E)-enoyl-CoA + H2O. The catalysed reaction is a (3Z)-enoyl-CoA = a 4-saturated (2E)-enoyl-CoA. It carries out the reaction a (3E)-enoyl-CoA = a 4-saturated (2E)-enoyl-CoA. The enzyme catalyses (3S)-3-hydroxybutanoyl-CoA = (3R)-3-hydroxybutanoyl-CoA. It catalyses the reaction a (3S)-3-hydroxyacyl-CoA + NAD(+) = a 3-oxoacyl-CoA + NADH + H(+). The protein operates within lipid metabolism; fatty acid beta-oxidation. In terms of biological role, multifunctional enzyme involved in fatty acid beta-oxidation. Also binds to RNA and microtubules. Possible role in subcellular mRNA localization and RNA-cytoskeleton interactions. This Oryza sativa subsp. japonica (Rice) protein is Peroxisomal fatty acid beta-oxidation multifunctional protein (MFP).